The sequence spans 185 residues: Ribosome-recycling factor (185 aa).

It belongs to the RRF family.

It localises to the cytoplasm. Functionally, responsible for the release of ribosomes from messenger RNA at the termination of protein biosynthesis. May increase the efficiency of translation by recycling ribosomes from one round of translation to another. This Streptococcus gordonii (strain Challis / ATCC 35105 / BCRC 15272 / CH1 / DL1 / V288) protein is Ribosome-recycling factor.